The following is a 551-amino-acid chain: Probable malate:quinone oxidoreductase (551 aa).

The segment covering 525-544 (QTAAAAPQAQPQLKPQPDAK) has biased composition (low complexity). A disordered region spans residues 525–551 (QTAAAAPQAQPQLKPQPDAKPVADIAL).

This sequence belongs to the MQO family. It depends on FAD as a cofactor.

The enzyme catalyses (S)-malate + a quinone = a quinol + oxaloacetate. Its pathway is carbohydrate metabolism; tricarboxylic acid cycle; oxaloacetate from (S)-malate (quinone route): step 1/1. This Enterobacter sp. (strain 638) protein is Probable malate:quinone oxidoreductase.